Here is a 345-residue protein sequence, read N- to C-terminus: Cytoskeleton protein RodZ (345 aa).

Residues 1-111 lie on the Cytoplasmic side of the membrane; it reads MNTEASQDQT…LGKKHKKRDG (111 aa). The HTH cro/C1-type domain maps to 19–79; sequence LRQARESLGL…KLVHLPEDEL (61 aa). Residues 30-49 constitute a DNA-binding region (H-T-H motif); it reads QQTVAERLCLKVSTIRDIEE. A helical; Signal-anchor for type II membrane protein membrane pass occupies residues 112–132; it reads WLMSFTWLIVLVVLGLTGAWW. Residues 133-345 lie on the Periplasmic side of the membrane; the sequence is WQNHQAQQAE…RVARLTVGVE (213 aa). The segment at 151 to 260 is disordered; it reads SAQLSQNGGQ…LPTADAGVSG (110 aa). The span at 188-225 shows a compositional bias: polar residues; sequence PLTNHSGSAITNSATTSSVPKTTSTEPVDTANTNTTMH. Low complexity predominate over residues 229-241; it reads AASAAVSPSQVPQ.

The protein belongs to the RodZ family.

It localises to the cell inner membrane. Cytoskeletal protein that is involved in cell-shape control through regulation of the length of the long axis. In Yersinia pestis (strain Pestoides F), this protein is Cytoskeleton protein RodZ.